We begin with the raw amino-acid sequence, 691 residues long: Inactive TPR repeat-containing thioredoxin TTL3 (691 aa).

Disordered stretches follow at residues 1–153 and 174–209; these read MSHS…AVSP and MASR…TSGK. A Phosphoserine modification is found at Ser-8. Over residues 19–39 the composition is skewed to basic and acidic residues; the sequence is RFRDLQRNDDDVNKPDFRELD. Phosphoserine is present on residues Ser-42 and Ser-45. Residues 51–79 are compositionally biased toward low complexity; the sequence is GSASSSAAATPTSSSGSSGSASGKPSVSS. Over residues 83-93 the composition is skewed to basic and acidic residues; that stretch reads KRLDDAYKSHS. Composition is skewed to polar residues over residues 94 to 108, 118 to 140, and 175 to 189; these read GELS…TTTR, SSTG…HTSP, and ASRT…CTGT. 8 TPR repeats span residues 220-253, 255-287, 289-321, 327-362, 412-445, 458-491, 492-525, and 527-559; these read PEEL…SPGN, AYRS…DPSY, RAHQ…PDQA, QTLE…GADS, AYVL…DQTN, VVRA…DDSN, SVLY…QPSY, and KALL…LPGD. The Thioredoxin domain maps to 596–683; the sequence is DKFKKSVALP…MVCPSHQFLE (88 aa).

As to quaternary structure, interacts with BRL2. In terms of tissue distribution, expressed in embryos and organ primordia in shoot and root. In primary and cauline leaves and petals, is expressed in hydathodes, guard cells, petiole cells and cells associated with differentiating vascular bundles.

Its function is as follows. Involved in osmotic and salt stress tolerance. May play a role in the control of meristematic cell size during osmotic stress. May function as an adapter protein for BRL2 and may be required for signaling affecting leaf vascular tissue pattern formation. The polypeptide is Inactive TPR repeat-containing thioredoxin TTL3 (Arabidopsis thaliana (Mouse-ear cress)).